Reading from the N-terminus, the 442-residue chain is GTPase Obg (442 aa).

An Obg domain is found at 1–158 (MFYDQARIFV…HWLELELKLL (158 aa)). One can recognise an OBG-type G domain in the interval 159 to 329 (ADVGLVGFPN…LIYHVHKGLE (171 aa)). GTP-binding positions include 165–172 (GFPNVGKS), 190–194 (FTTLE), 212–215 (DIPG), 282–285 (NKMD), and 310–312 (SAA). Serine 172 and threonine 192 together coordinate Mg(2+). Residues 349–427 (FTGKTEERFK…IGDLDFDFIE (79 aa)) form the OCT domain.

The protein belongs to the TRAFAC class OBG-HflX-like GTPase superfamily. OBG GTPase family. As to quaternary structure, monomer. Mg(2+) serves as cofactor.

It localises to the cytoplasm. In terms of biological role, an essential GTPase which binds GTP, GDP and possibly (p)ppGpp with moderate affinity, with high nucleotide exchange rates and a fairly low GTP hydrolysis rate. Plays a role in control of the cell cycle, stress response, ribosome biogenesis and in those bacteria that undergo differentiation, in morphogenesis control. The protein is GTPase Obg of Heliobacterium modesticaldum (strain ATCC 51547 / Ice1).